We begin with the raw amino-acid sequence, 253 residues long: Pro-opiomelanocortin A (253 aa).

The first 21 residues, 1–21, serve as a signal peptide directing secretion; sequence MLCPAWLLAVAVVGVVRGVKG. Gln22 is subject to Pyrrolidone carboxylic acid. Cystine bridges form between Cys23–Cys45 and Cys29–Cys41. Ser104 is modified (N-acetylserine; in Corticotropin). Valine amide is present on Val116. The segment at 228–253 is disordered; the sequence is QKREQWGREEGEEKRALGERKYHFQG. Gln252 carries the post-translational modification Glutamine amide; partial.

It belongs to the POMC family. Post-translationally, specific enzymatic cleavages at paired basic residues yield the different active peptides. In terms of processing, acetylation of beta-endorphin occurs in a tissue-specific manner. C-terminal peptide 1 and C-terminal peptide 2 are detected in the anterior part of the nucleus lateralis tuberis of hypothalamus, in dorsal hypothalamus, thalamus, telencephalon, optic tectum and medulla oblongata (at protein level). Expressed in pituitary and hypothalamus of adult diploid animals, and hypothalamus of triploid and ovulated female trout.

The protein localises to the secreted. Its function is as follows. Stimulates the adrenal glands to release cortisol. In terms of biological role, melanocyte-stimulating hormone alpha: Anorexigenic peptide. Increases the pigmentation of skin by increasing melanin production in melanocytes. Functionally, melanocyte-stimulating hormone beta: Increases the pigmentation of skin by increasing melanin production in melanocytes. Beta-endorphin: Endogenous orexigenic opiate. Its function is as follows. Endogenous opiate. In Oncorhynchus mykiss (Rainbow trout), this protein is Pro-opiomelanocortin A (pomca).